A 427-amino-acid chain; its full sequence is Flotillin-1 (427 aa).

Residues S19, S163, and S385 each carry the phosphoserine modification. Residue T387 is modified to Phosphothreonine.

It belongs to the band 7/mec-2 family. Flotillin subfamily. As to quaternary structure, heterooligomeric complex of flotillin-1 and flotillin-2 and caveolin-1 and caveolin-2. Interacts with ECPAS.

It is found in the cell membrane. The protein localises to the endosome. Its subcellular location is the membrane. The protein resides in the caveola. It localises to the melanosome. It is found in the membrane raft. Functionally, may act as a scaffolding protein within caveolar membranes, functionally participating in formation of caveolae or caveolae-like vesicles. This Macaca mulatta (Rhesus macaque) protein is Flotillin-1 (FLOT1).